A 720-amino-acid chain; its full sequence is DNA gyrase subunit B (720 aa).

Residues methionine 1–proline 26 show a composition bias toward low complexity. Positions methionine 1 to proline 42 are disordered. The 115-residue stretch at cysteine 498–proline 612 folds into the Toprim domain. Mg(2+)-binding residues include glutamate 504, aspartate 577, and aspartate 579.

The protein belongs to the type II topoisomerase GyrB family. Heterotetramer, composed of two GyrA and two GyrB chains. In the heterotetramer, GyrA contains the active site tyrosine that forms a transient covalent intermediate with the DNA, while GyrB binds cofactors and catalyzes ATP hydrolysis. Requires Mg(2+) as cofactor. Mn(2+) is required as a cofactor. Ca(2+) serves as cofactor.

It is found in the cytoplasm. It catalyses the reaction ATP-dependent breakage, passage and rejoining of double-stranded DNA.. Supercoiling activity inhibited by novobiocin and coumermycin, DNA wrapping around gyrase is not inhibited. Its function is as follows. A type II topoisomerase that negatively supercoils DNA in an ATP-dependent manner. About 140 bp of DNA wraps around gyrase in the presence or absence of ATP, when ATP is added negative supercoils are made. A type II topoisomerase that negatively supercoils closed circular double-stranded (ds) DNA in an ATP-dependent manner to modulate DNA topology and maintain chromosomes in an underwound state. Negative supercoiling favors strand separation, and DNA replication, transcription, recombination and repair, all of which involve strand separation. Also able to catalyze the interconversion of other topological isomers of dsDNA rings, including catenanes and knotted rings. Type II topoisomerases break and join 2 DNA strands simultaneously in an ATP-dependent manner. The polypeptide is DNA gyrase subunit B (Micrococcus luteus (strain ATCC 4698 / DSM 20030 / JCM 1464 / CCM 169 / CCUG 5858 / IAM 1056 / NBRC 3333 / NCIMB 9278 / NCTC 2665 / VKM Ac-2230) (Micrococcus lysodeikticus)).